The sequence spans 435 residues: Tyrosine-protein phosphatase non-receptor type 1 (435 aa).

An N-acetylmethionine modification is found at M1. One can recognise a Tyrosine-protein phosphatase domain in the interval 3-277; the sequence is MEKEFEQIDK…RFSYLAVIEG (275 aa). Y20 is modified (phosphotyrosine). Phosphoserine; by PKB/AKT1, CLK1 and CLK2 is present on S50. Position 66 is a phosphotyrosine; by EGFR (Y66). Residues D181 and 215–221 contribute to the substrate site; that span reads CSAGIGR. C215 acts as the Phosphocysteine intermediate in catalysis. C215 carries the post-translational modification Cysteine persulfide; alternate. C215 carries the cysteine sulfenic acid (-SOH); alternate modification. C215 carries the cysteine sulfinic acid (-SO2H); alternate modification. C215 bears the S-nitrosocysteine; in reversibly inhibited form mark. Positions 215 to 216 form a cross-link, n,N-(cysteine-1,S-diyl)serine (Cys-Ser); in inhibited form; it reads CS. Phosphoserine; by CLK1 and CLK2 occurs at positions 242 and 243. Q262 contributes to the substrate binding site. The span at 338 to 351 shows a compositional bias: basic and acidic residues; it reads TQEDKDCPIKEEKG. Residues 338–359 form a disordered region; the sequence is TQEDKDCPIKEEKGSPLNAAPY. S352, S363, and S365 each carry phosphoserine. At T368 the chain carries Phosphothreonine. A Phosphoserine; by PKC modification is found at S378. Residues 378 to 398 form a disordered region; that stretch reads SLRGAQAASPAKGEPSLPEKD. Residue S386 is modified to Phosphoserine; by CDK1.

It belongs to the protein-tyrosine phosphatase family. Non-receptor class 1 subfamily. In terms of assembly, interacts with EPHA3 (phosphorylated); dephosphorylates EPHA3 and may regulate its trafficking and function. Interacts with MET. Interacts with NCK1. Post-translationally, oxidized on Cys-215; the Cys-SOH formed in response to redox signaling reacts with the alpha-amido of the following residue to form a sulfenamide cross-link, triggering a conformational change that inhibits substrate binding and activity. The active site can be restored by reduction. In terms of processing, ser-50 is the major site of phosphorylation as compared to Ser-242 and Ser-243. Activated by phosphorylation at Ser-50. S-nitrosylation of Cys-215 inactivates the enzyme activity. Post-translationally, sulfhydration at Cys-215 following endoplasmic reticulum stress inactivates the enzyme activity, promoting EIF2AK3/PERK activity. As to expression, expressed in keratinocytes (at protein level).

The protein resides in the endoplasmic reticulum membrane. The catalysed reaction is O-phospho-L-tyrosyl-[protein] + H2O = L-tyrosyl-[protein] + phosphate. Functionally, tyrosine-protein phosphatase which acts as a regulator of endoplasmic reticulum unfolded protein response. Mediates dephosphorylation of EIF2AK3/PERK; inactivating the protein kinase activity of EIF2AK3/PERK. May play an important role in CKII- and p60c-src-induced signal transduction cascades. May regulate the EFNA5-EPHA3 signaling pathway which modulates cell reorganization and cell-cell repulsion. May also regulate the hepatocyte growth factor receptor signaling pathway through dephosphorylation of MET. This Homo sapiens (Human) protein is Tyrosine-protein phosphatase non-receptor type 1 (PTPN1).